The sequence spans 89 residues: Small ribosomal subunit protein uS15 (89 aa).

It belongs to the universal ribosomal protein uS15 family. Part of the 30S ribosomal subunit. Forms a bridge to the 50S subunit in the 70S ribosome, contacting the 23S rRNA.

Functionally, one of the primary rRNA binding proteins, it binds directly to 16S rRNA where it helps nucleate assembly of the platform of the 30S subunit by binding and bridging several RNA helices of the 16S rRNA. In terms of biological role, forms an intersubunit bridge (bridge B4) with the 23S rRNA of the 50S subunit in the ribosome. This Proteus mirabilis (strain HI4320) protein is Small ribosomal subunit protein uS15.